Reading from the N-terminus, the 219-residue chain is Lipoprotein-releasing system ATP-binding protein LolD (219 aa).

Residues 5-219 (LKAGDIFKTY…KVVMQDGVII (215 aa)) enclose the ABC transporter domain. Position 37–44 (37–44 (GASGAGKS)) interacts with ATP.

The protein belongs to the ABC transporter superfamily. Lipoprotein translocase (TC 3.A.1.125) family. In terms of assembly, the complex is composed of two ATP-binding proteins (LolD) and two transmembrane proteins (LolC and LolE).

It localises to the cell inner membrane. Part of the ABC transporter complex LolCDE involved in the translocation of mature outer membrane-directed lipoproteins, from the inner membrane to the periplasmic chaperone, LolA. Responsible for the formation of the LolA-lipoprotein complex in an ATP-dependent manner. The chain is Lipoprotein-releasing system ATP-binding protein LolD from Cytophaga hutchinsonii (strain ATCC 33406 / DSM 1761 / CIP 103989 / NBRC 15051 / NCIMB 9469 / D465).